The following is a 724-amino-acid chain: Long-chain-fatty-acid--CoA ligase ACSBG1 (724 aa).

Residues 1-30 (MPRNSGAGYGCPHGDPSMLDSRETPQESRQ) form a disordered region. Basic and acidic residues predominate over residues 20–30 (DSRETPQESRQ). S53 and S56 each carry phosphoserine. Residues 282-290 (TSGTTGNPK), 472-477 (AGYGLS), D550, and R565 contribute to the ATP site. Phosphotyrosine is present on Y658. K701 lines the ATP pocket.

It belongs to the ATP-dependent AMP-binding enzyme family. Bubblegum subfamily. In terms of tissue distribution, expressed primarily in brain. Expressed at lower level in testis and adrenal gland. Present in all regions of brain except pituitary.

Its subcellular location is the cytoplasm. It localises to the cytoplasmic vesicle. It is found in the microsome. The protein localises to the endoplasmic reticulum. The protein resides in the cell membrane. It catalyses the reaction a long-chain fatty acid + ATP + CoA = a long-chain fatty acyl-CoA + AMP + diphosphate. The catalysed reaction is (E)-hexadec-2-enoate + ATP + CoA = (2E)-hexadecenoyl-CoA + AMP + diphosphate. The enzyme catalyses hexadecanoate + ATP + CoA = hexadecanoyl-CoA + AMP + diphosphate. Its function is as follows. Catalyzes the conversion of fatty acids such as long-chain and very long-chain fatty acids to their active form acyl-CoAs for both synthesis of cellular lipids, and degradation via beta-oxidation. Can activate diverse saturated, monosaturated and polyunsaturated fatty acids. This Homo sapiens (Human) protein is Long-chain-fatty-acid--CoA ligase ACSBG1.